The chain runs to 307 residues: Protein FAM76A (307 aa).

2 disordered regions span residues 161-181 (SRLS…SSIQ) and 287-307 (KQAA…ITSP). Residues 217-297 (IIAQLKEEVA…QAAALSKGKK (81 aa)) are a coiled coil.

Belongs to the FAM76 family.

In Gallus gallus (Chicken), this protein is Protein FAM76A (FAM76A).